The chain runs to 490 residues: Sushi domain-containing protein 4 (490 aa).

The disordered stretch occupies residues 1 to 21 (MYHGMNPSNGDGFLEQQQQQQ). Positions 1-41 (MYHGMNPSNGDGFLEQQQQQQQPQSPQRLLAVILWFQLALC) are cleaved as a signal peptide. Residues 42 to 319 (FGPAQLTGGF…PSTHETLLTT (278 aa)) are Extracellular-facing. 4 consecutive Sushi domains span residues 55–119 (QVCA…ICVQ), 120–179 (EDCR…ICQG), 178–239 (QGCL…RCLA), and 241–304 (EVCP…YCIK). 8 cysteine pairs are disulfide-bonded: cysteine 57–cysteine 99, cysteine 85–cysteine 117, cysteine 122–cysteine 165, cysteine 147–cysteine 177, cysteine 180–cysteine 224, cysteine 210–cysteine 237, cysteine 243–cysteine 289, and cysteine 274–cysteine 302. Residues asparagine 104 and asparagine 134 are each glycosylated (N-linked (GlcNAc...) asparagine). Residue asparagine 192 is glycosylated (N-linked (GlcNAc...) asparagine). The helical transmembrane segment at 320 to 340 (WKIVAFTATSVLLVLLLVILA) threads the bilayer. Over 341–490 (RMFQTKFKAH…DEIPLMEEDP (150 aa)) the chain is Cytoplasmic. Residues 401-490 (GCPLPVDDQS…DEIPLMEEDP (90 aa)) form a disordered region. Residues 430 to 456 (CDSVSGSSELLQSLYSPPRCQESTHPA) show a composition bias toward polar residues. A compositionally biased stretch (acidic residues) spans 479–490 (IADEIPLMEEDP).

As to expression, isoform 3 is the predominant isoform in all tissues except cortex, cerebellum, kidney, and breast. Isoform 1 is found primarily in the esophagus and the brain.

It localises to the membrane. The protein resides in the secreted. Its function is as follows. Acts as a complement inhibitor by disrupting the formation of the classical C3 convertase. Isoform 3 inhibits the classical complement pathway, while membrane-bound isoform 1 inhibits deposition of C3b via both the classical and alternative complement pathways. The polypeptide is Sushi domain-containing protein 4 (SUSD4) (Homo sapiens (Human)).